A 274-amino-acid chain; its full sequence is 2,3,4,5-tetrahydropyridine-2,6-dicarboxylate N-succinyltransferase (274 aa).

The protein belongs to the transferase hexapeptide repeat family.

It localises to the cytoplasm. The catalysed reaction is (S)-2,3,4,5-tetrahydrodipicolinate + succinyl-CoA + H2O = (S)-2-succinylamino-6-oxoheptanedioate + CoA. Its pathway is amino-acid biosynthesis; L-lysine biosynthesis via DAP pathway; LL-2,6-diaminopimelate from (S)-tetrahydrodipicolinate (succinylase route): step 1/3. The sequence is that of 2,3,4,5-tetrahydropyridine-2,6-dicarboxylate N-succinyltransferase from Erwinia tasmaniensis (strain DSM 17950 / CFBP 7177 / CIP 109463 / NCPPB 4357 / Et1/99).